The primary structure comprises 347 residues: Tetraacyldisaccharide 4'-kinase (347 aa).

65–72 (FVGGTGKT) is a binding site for ATP.

The protein belongs to the LpxK family.

It catalyses the reaction a lipid A disaccharide + ATP = a lipid IVA + ADP + H(+). Its pathway is glycolipid biosynthesis; lipid IV(A) biosynthesis; lipid IV(A) from (3R)-3-hydroxytetradecanoyl-[acyl-carrier-protein] and UDP-N-acetyl-alpha-D-glucosamine: step 6/6. Its function is as follows. Transfers the gamma-phosphate of ATP to the 4'-position of a tetraacyldisaccharide 1-phosphate intermediate (termed DS-1-P) to form tetraacyldisaccharide 1,4'-bis-phosphate (lipid IVA). This Janthinobacterium sp. (strain Marseille) (Minibacterium massiliensis) protein is Tetraacyldisaccharide 4'-kinase.